Consider the following 312-residue polypeptide: Porphobilinogen deaminase (312 aa).

S-(dipyrrolylmethanemethyl)cysteine is present on Cys-243.

The protein belongs to the HMBS family. As to quaternary structure, monomer. The cofactor is dipyrromethane.

It catalyses the reaction 4 porphobilinogen + H2O = hydroxymethylbilane + 4 NH4(+). Its pathway is porphyrin-containing compound metabolism; protoporphyrin-IX biosynthesis; coproporphyrinogen-III from 5-aminolevulinate: step 2/4. Tetrapolymerization of the monopyrrole PBG into the hydroxymethylbilane pre-uroporphyrinogen in several discrete steps. This chain is Porphobilinogen deaminase, found in Vibrio vulnificus (strain CMCP6).